The primary structure comprises 162 residues: Large ribosomal subunit protein uL15 (162 aa).

A compositionally biased stretch (basic and acidic residues) spans 1–13 (MNLNELRDNEGSR). Residues 1–39 (MNLNELRDNEGSRYRKKRLGRGIGSGKGKTSGRGVKGQK) are disordered. Positions 21 to 35 (RGIGSGKGKTSGRGV) are enriched in gly residues.

The protein belongs to the universal ribosomal protein uL15 family. In terms of assembly, part of the 50S ribosomal subunit.

Functionally, binds to the 23S rRNA. This is Large ribosomal subunit protein uL15 from Gluconobacter oxydans (strain 621H) (Gluconobacter suboxydans).